Reading from the N-terminus, the 209-residue chain is Ras-like GTP-binding protein RYL2 (209 aa).

12–19 lines the GTP pocket; that stretch reads GAQGVGKT. The Effector region motif lies at 34–42; it reads QASTIGASF. Residues 60 to 64 and 118 to 121 contribute to the GTP site; these read DTAGQ and TKVD. 2 S-geranylgeranyl cysteine lipidation sites follow: Cys208 and Cys209.

The protein belongs to the small GTPase superfamily. Rab family.

It is found in the cell membrane. In terms of biological role, protein transport. Probably involved in vesicular traffic. The protein is Ras-like GTP-binding protein RYL2 (RYL2) of Yarrowia lipolytica (strain CLIB 122 / E 150) (Yeast).